Consider the following 1007-residue polypeptide: Serine/threonine-protein kinase PRP4 homolog (1007 aa).

The span at 1–10 (MAAAETQSLR) shows a compositional bias: polar residues. The interval 1-99 (MAAAETQSLR…EGMSPAKRTK (99 aa)) is disordered. Residue A2 is modified to N-acetylalanine. Phosphoserine occurs at positions 8, 20, 23, and 32. Basic residues-rich tracts occupy residues 39–59 (KHSR…KHKH) and 67–81 (KKHK…HKRK). Residues 82–91 (EIIDASDKEG) show a composition bias toward basic and acidic residues. Phosphoserine occurs at positions 87 and 93. N6-acetyllysine; alternate is present on K99. K99 is covalently cross-linked (Glycyl lysine isopeptide (Lys-Gly) (interchain with G-Cter in SUMO2); alternate). K111 is covalently cross-linked (Glycyl lysine isopeptide (Lys-Gly) (interchain with G-Cter in SUMO2)). A Glycyl lysine isopeptide (Lys-Gly) (interchain with G-Cter in SUMO2); alternate cross-link involves residue K117. A Glycyl lysine isopeptide (Lys-Gly) (interchain with G-Cter in SUMO1); alternate cross-link involves residue K117. Residue S131 is modified to Phosphoserine. Y140 carries the phosphotyrosine modification. Disordered stretches follow at residues 140–533 (YESG…EEED) and 559–583 (SNMS…SPDD). S142, S144, and S166 each carry phosphoserine. Residues 157-168 (GNRSSTRSSSTK) are compositionally biased toward low complexity. Glycyl lysine isopeptide (Lys-Gly) (interchain with G-Cter in SUMO2) cross-links involve residues K170 and K177. 2 stretches are compositionally biased toward basic residues: residues 179–202 (TTKK…KKSK) and 214–230 (RSKS…SKRS). Residues S239, S241, S257, S277, S283, S292, and S294 each carry the phosphoserine modification. The segment covering 247–270 (RSQEKIGKARSPTDDKVKIEDKSK) has biased composition (basic and acidic residues). Basic residues predominate over residues 302–315 (SKDRRSRSKERKSK). A compositionally biased stretch (basic and acidic residues) spans 316–325 (RSETDKEKKP). A phosphoserine mark is found at S328, S354, S356, S366, and S368. Over residues 342–367 (PSRRPGRSPKRRSLSPKPRDKSRRSR) the composition is skewed to basic residues. The residue at position 385 (T385) is a Phosphothreonine. Position 387 is a phosphoserine (S387). 2 stretches are compositionally biased toward basic and acidic residues: residues 395 to 408 (RSLE…ERRR) and 415 to 429 (RPRD…RSKD). A phosphoserine mark is found at S427, S431, and S437. Positions 438–497 (PTRRRSRSPIRRRSRSPLRRSRSPRRRSRSPRRRDRGRRSRSRLRRRSRSRGGRRRRSRS) are enriched in basic residues. 7 positions are modified to phosphoserine: S518, S519, S520, S565, S569, S578, and S580. Over residues 518–533 (SSSDDNLEDFDVEEED) the composition is skewed to acidic residues. Positions 562 to 581 (SVPSEPSSPQSSTRTRSPSP) are enriched in low complexity. Residues K593 and K659 each participate in a glycyl lysine isopeptide (Lys-Gly) (interchain with G-Cter in SUMO2) cross-link. The Protein kinase domain occupies 687–1006 (YNVYGYTGQG…ALQHAFIQEK (320 aa)). Residues 693–701 (TGQGVFSNV) and K717 contribute to the ATP site. Position 717 is an N6-acetyllysine (K717). D815 (proton acceptor) is an active-site residue. Y849 carries the post-translational modification Phosphotyrosine. Residue S852 is modified to Phosphoserine.

Belongs to the protein kinase superfamily. CMGC Ser/Thr protein kinase family. As to quaternary structure, interacts with CLK1 C-terminus. Associates with the U5 snRNP and NCOR1 deacetylase complexes. Identified in the spliceosome C complex. In terms of processing, phosphorylated by CLK1. Autophosphorylated; phosphorylation inhibits interaction with its targets, such as PRPF6 or SMARCA4. In terms of tissue distribution, ubiquitous.

The protein localises to the nucleus. It is found in the chromosome. The protein resides in the centromere. Its subcellular location is the kinetochore. The catalysed reaction is L-seryl-[protein] + ATP = O-phospho-L-seryl-[protein] + ADP + H(+). It catalyses the reaction L-threonyl-[protein] + ATP = O-phospho-L-threonyl-[protein] + ADP + H(+). In terms of biological role, serine/threonine kinase involved in spliceosomal assembly as well as mitosis and signaling regulation. Connects chromatin mediated regulation of transcription and pre-mRNA splicing. During spliceosomal assembly, interacts with and phosphorylates PRPF6 and PRPF31, components of the U4/U6-U5 tri-small nuclear ribonucleoprotein (snRNP), to facilitate the formation of the spliceosome B complex. Plays a role in regulating transcription and the spindle assembly checkpoint (SAC). Associates with U5 snRNP and NCOR1 deacetylase complexes which may allow a coordination of pre-mRNA splicing with chromatin remodeling events involved in transcriptional regulation. Associates and probably phosphorylates SMARCA4 and NCOR1. Phosphorylates SRSF1. Associates with kinetochores during mitosis and is necessary for recruitment and maintenance of the checkpoint proteins such as MAD1L1 and MAD12L1 at the kinetochores. Phosphorylates and regulates the activity of the transcription factors such as ELK1 and KLF13. Phosphorylates nuclear YAP1 and WWTR1/TAZ which induces nuclear exclusion and regulates Hippo signaling pathway, involved in tissue growth control. The chain is Serine/threonine-protein kinase PRP4 homolog from Homo sapiens (Human).